Reading from the N-terminus, the 370-residue chain is Coiled-coil domain-containing protein 89 (370 aa).

The disordered stretch occupies residues 1 to 38 (MPQEESAPRMDTPSSEEPLDKQNRKLEDQEEEMGFKEL). At Thr-12 the chain carries Phosphothreonine. Basic and acidic residues predominate over residues 18–38 (PLDKQNRKLEDQEEEMGFKEL). The stretch at 19 to 346 (LDKQNRKLED…YDELRLQSEA (328 aa)) forms a coiled coil.

The protein belongs to the CCDC89 family. As to quaternary structure, interacts with HEY1.

It localises to the cytoplasm. Its subcellular location is the nucleus. The polypeptide is Coiled-coil domain-containing protein 89 (Bos taurus (Bovine)).